Here is a 429-residue protein sequence, read N- to C-terminus: Adenylosuccinate synthetase (429 aa).

GTP-binding positions include 12–18 (GDEGKGK) and 40–42 (GHT). Catalysis depends on Asp13, which acts as the Proton acceptor. The Mg(2+) site is built by Asp13 and Gly40. IMP-binding positions include 13–16 (DEGK), 38–41 (NAGH), Thr129, Arg143, Gln223, Thr238, and Arg302. His41 serves as the catalytic Proton donor. Residue 298–304 (TVTGRKR) coordinates substrate. Residues Arg304, 330 to 332 (KLD), and 412 to 414 (STS) each bind GTP.

Belongs to the adenylosuccinate synthetase family. In terms of assembly, homodimer. Mg(2+) serves as cofactor.

It localises to the cytoplasm. The enzyme catalyses IMP + L-aspartate + GTP = N(6)-(1,2-dicarboxyethyl)-AMP + GDP + phosphate + 2 H(+). Its pathway is purine metabolism; AMP biosynthesis via de novo pathway; AMP from IMP: step 1/2. Functionally, plays an important role in the de novo pathway of purine nucleotide biosynthesis. Catalyzes the first committed step in the biosynthesis of AMP from IMP. This Novosphingobium aromaticivorans (strain ATCC 700278 / DSM 12444 / CCUG 56034 / CIP 105152 / NBRC 16084 / F199) protein is Adenylosuccinate synthetase.